A 301-amino-acid chain; its full sequence is tRNA dimethylallyltransferase (301 aa).

9–16 is an ATP binding site; it reads GPTASGKS. 11-16 contacts substrate; sequence TASGKS. The segment at 34-37 is interaction with substrate tRNA; the sequence is DSMQ.

This sequence belongs to the IPP transferase family. As to quaternary structure, monomer. The cofactor is Mg(2+).

It carries out the reaction adenosine(37) in tRNA + dimethylallyl diphosphate = N(6)-dimethylallyladenosine(37) in tRNA + diphosphate. Catalyzes the transfer of a dimethylallyl group onto the adenine at position 37 in tRNAs that read codons beginning with uridine, leading to the formation of N6-(dimethylallyl)adenosine (i(6)A). The chain is tRNA dimethylallyltransferase from Corynebacterium glutamicum (strain R).